A 505-amino-acid chain; its full sequence is ATP synthase subunit alpha (505 aa).

The interval 118–138 (VDGLGPINTTNTRPIESPAPG) is disordered. Position 172-179 (172-179 (GDRQTGKT)) interacts with ATP.

Belongs to the ATPase alpha/beta chains family. In terms of assembly, F-type ATPases have 2 components, CF(1) - the catalytic core - and CF(0) - the membrane proton channel. CF(1) has five subunits: alpha(3), beta(3), gamma(1), delta(1), epsilon(1). CF(0) has three main subunits: a(1), b(2) and c(9-12). The alpha and beta chains form an alternating ring which encloses part of the gamma chain. CF(1) is attached to CF(0) by a central stalk formed by the gamma and epsilon chains, while a peripheral stalk is formed by the delta and b chains.

The protein resides in the cell membrane. The enzyme catalyses ATP + H2O + 4 H(+)(in) = ADP + phosphate + 5 H(+)(out). Functionally, produces ATP from ADP in the presence of a proton gradient across the membrane. The alpha chain is a regulatory subunit. The protein is ATP synthase subunit alpha of Bacillus cereus (strain ATCC 14579 / DSM 31 / CCUG 7414 / JCM 2152 / NBRC 15305 / NCIMB 9373 / NCTC 2599 / NRRL B-3711).